The primary structure comprises 211 residues: Small ribosomal subunit protein uS3 (211 aa).

The region spanning 38–106 (LRSFVKKTFH…EVELHIVEVK (69 aa)) is the KH type-2 domain.

The protein belongs to the universal ribosomal protein uS3 family. As to quaternary structure, part of the 30S ribosomal subunit. Forms a tight complex with proteins S10 and S14.

In terms of biological role, binds the lower part of the 30S subunit head. Binds mRNA in the 70S ribosome, positioning it for translation. In Anaplasma phagocytophilum (strain HZ), this protein is Small ribosomal subunit protein uS3.